Reading from the N-terminus, the 62-residue chain is Calmodulin regulator protein PCP4 (62 aa).

A disordered region spans residues 1 to 39 (MSERQGAGATNGKDKTSGENDGQKKVQEEFDIDMDAPET). Positions 12-28 (GKDKTSGENDGQKKVQE) are enriched in basic and acidic residues. The interval 28-40 (EEFDIDMDAPETE) is acidic; binds calcium and is required for modulating the calcium-binding kinetics of calmodulin. The region spanning 39-62 (TERAAVAIQSQFRKFQKKKAGSQS) is the IQ domain.

This sequence belongs to the PCP4 family. Binds to both calcium-free and calcium-bound calmodulin. The affinity for the calcium-bound form is 50-fold greater.

Functionally, functions as a modulator of calcium-binding by calmodulin. Thereby, regulates calmodulin activity and the different processes it controls. For instance, may play a role in neuronal differentiation through activation of calmodulin-dependent kinase signaling pathways. The sequence is that of Calmodulin regulator protein PCP4 from Homo sapiens (Human).